The chain runs to 332 residues: Putative peptide import ATP-binding protein BruAb2_1033 (332 aa).

The ABC transporter domain maps to 11-261 (LEVSNLSVDF…PLHPYTEGLL (251 aa)). 47–54 (GESGSGKS) serves as a coordination point for ATP.

This sequence belongs to the ABC transporter superfamily. In terms of assembly, the complex is composed of two ATP-binding proteins (BruAb2_1033 and BruAb2_1034), two transmembrane proteins (BruAb2_1031 and BruAb2_1032) and a solute-binding protein (BruAb2_1030).

It localises to the cell inner membrane. In terms of biological role, probably part of an ABC transporter complex that could be involved in peptide import. Probably responsible for energy coupling to the transport system. The sequence is that of Putative peptide import ATP-binding protein BruAb2_1033 from Brucella abortus biovar 1 (strain 9-941).